The following is a 136-amino-acid chain: Urease subunit beta (136 aa).

It belongs to the urease beta subunit family. In terms of assembly, heterotrimer of UreA (gamma), UreB (beta) and UreC (alpha) subunits. Three heterotrimers associate to form the active enzyme.

The protein localises to the cytoplasm. The enzyme catalyses urea + 2 H2O + H(+) = hydrogencarbonate + 2 NH4(+). The protein operates within nitrogen metabolism; urea degradation; CO(2) and NH(3) from urea (urease route): step 1/1. The protein is Urease subunit beta of Staphylococcus aureus (strain Mu3 / ATCC 700698).